The following is a 165-amino-acid chain: SPbeta prophage-derived uncharacterized protein YorR (165 aa).

The sequence is that of SPbeta prophage-derived uncharacterized protein YorR (yorR) from Bacillus subtilis (strain 168).